A 205-amino-acid chain; its full sequence is Venom allergen 5 (205 aa).

Cystine bridges form between C4–C16, C8–C104, C28–C96, and C171–C188. One can recognise an SCP domain in the interval 47-190 (VNEHNRFRQK…MQHHYLICNY (144 aa)).

This sequence belongs to the CRISP family. Venom allergen 5-like subfamily. Expressed by the venom gland.

It localises to the secreted. The polypeptide is Venom allergen 5 (Polistes fuscatus (Paper wasp)).